Reading from the N-terminus, the 1059-residue chain is Isoleucine--tRNA ligase (1059 aa).

A 'HIGH' region motif is present at residues 47 to 57 (PYTTGHIHLGT). A 'KMSKS' region motif is present at residues 591 to 595 (KMSKS). Lysine 594 contacts ATP.

This sequence belongs to the class-I aminoacyl-tRNA synthetase family. IleS type 2 subfamily. In terms of assembly, monomer. Zn(2+) serves as cofactor.

The protein resides in the cytoplasm. It catalyses the reaction tRNA(Ile) + L-isoleucine + ATP = L-isoleucyl-tRNA(Ile) + AMP + diphosphate. Its function is as follows. Catalyzes the attachment of isoleucine to tRNA(Ile). As IleRS can inadvertently accommodate and process structurally similar amino acids such as valine, to avoid such errors it has two additional distinct tRNA(Ile)-dependent editing activities. One activity is designated as 'pretransfer' editing and involves the hydrolysis of activated Val-AMP. The other activity is designated 'posttransfer' editing and involves deacylation of mischarged Val-tRNA(Ile). The protein is Isoleucine--tRNA ligase of Methanoculleus marisnigri (strain ATCC 35101 / DSM 1498 / JR1).